Here is a 424-residue protein sequence, read N- to C-terminus: Lipoamide acyltransferase component of branched-chain alpha-keto acid dehydrogenase complex (424 aa).

Residues 3–78 (IEQMTMPQLG…QVGEMICKIE (76 aa)) enclose the Lipoyl-binding domain. Lys44 carries the N6-lipoyllysine modification. A disordered region spans residues 82 to 115 (ANPAEQKQEQPAASEAAENPVAKSAGAADQPNKK). Residues 116-153 (RYSPAVLRLAGEHGIDLDQVTGTGAGGRITRKDIQRLI) enclose the Peripheral subunit-binding (PSBD) domain. The segment at 154-193 (ETGGVQEQNPEELKTAAPAPKSASKPEPKEETSYPASAAG) is disordered. Active-site residues include His395 and Asp399.

The protein belongs to the 2-oxoacid dehydrogenase family. Forms a 24-polypeptide structural core with octahedral symmetry. The cofactor is (R)-lipoate.

The enzyme catalyses N(6)-[(R)-dihydrolipoyl]-L-lysyl-[protein] + 2-methylpropanoyl-CoA = N(6)-[(R)-S(8)-2-methylpropanoyldihydrolipoyl]-L-lysyl-[protein] + CoA. The branched-chain alpha-keto dehydrogenase complex catalyzes the overall conversion of alpha-keto acids to acyl-CoA and CO(2). It contains multiple copies of three enzymatic components: branched-chain alpha-keto acid decarboxylase (E1), lipoamide acyltransferase (E2) and lipoamide dehydrogenase (E3). This Bacillus subtilis (strain 168) protein is Lipoamide acyltransferase component of branched-chain alpha-keto acid dehydrogenase complex (bfmBB).